Here is a 432-residue protein sequence, read N- to C-terminus: Adenylosuccinate synthetase (432 aa).

GTP is bound by residues 12-18 and 40-42; these read GDEGKGK and GHT. The active-site Proton acceptor is the Asp-13. Mg(2+)-binding residues include Asp-13 and Gly-40. Residues 13–16, 38–41, Thr-132, Arg-146, Gln-226, Thr-241, and Arg-305 contribute to the IMP site; these read DEGK and NAGH. The Proton donor role is filled by His-41. Substrate is bound at residue 301–307; that stretch reads TVTGRKR. GTP-binding positions include Arg-307, 333–335, and 415–417; these read KLD and STS.

Belongs to the adenylosuccinate synthetase family. Homodimer. Mg(2+) serves as cofactor.

It is found in the cytoplasm. It catalyses the reaction IMP + L-aspartate + GTP = N(6)-(1,2-dicarboxyethyl)-AMP + GDP + phosphate + 2 H(+). Its pathway is purine metabolism; AMP biosynthesis via de novo pathway; AMP from IMP: step 1/2. Its function is as follows. Plays an important role in the de novo pathway of purine nucleotide biosynthesis. Catalyzes the first committed step in the biosynthesis of AMP from IMP. The sequence is that of Adenylosuccinate synthetase from Rhizobium etli (strain ATCC 51251 / DSM 11541 / JCM 21823 / NBRC 15573 / CFN 42).